Consider the following 439-residue polypeptide: Mitochondrial distribution and morphology protein 12 (439 aa).

Residues 1–439 form the SMP-LTD domain; it reads MSIDVNWRSA…VYPSFWTFLI (439 aa). Acidic residues predominate over residues 70–85; the sequence is YEEDDDDHTSDASEEL. Disordered regions lie at residues 70–102, 184–274, and 353–386; these read YEED…ELNE, SGWS…PPRM, and GSEQ…RHGG. Basic and acidic residues predominate over residues 197-212; it reads GRSERHAGMKHQRAEP. A compositionally biased stretch (polar residues) spans 215–230; that stretch reads DTSNSTSRPSTANTLP. Residues 231 to 240 are compositionally biased toward low complexity; that stretch reads SHPSSSSKNS. Basic and acidic residues predominate over residues 247–261; the sequence is RNDHPSLHAGEHIED.

It belongs to the MDM12 family. In terms of assembly, component of the ER-mitochondria encounter structure (ERMES) or MDM complex, composed of mmm1, mdm10, mdm12 and mdm34. A mmm1 homodimer associates with one molecule of mdm12 on each side in a pairwise head-to-tail manner, and the SMP-LTD domains of mmm1 and mdm12 generate a continuous hydrophobic tunnel for phospholipid trafficking.

Its subcellular location is the mitochondrion outer membrane. The protein resides in the endoplasmic reticulum membrane. Its function is as follows. Component of the ERMES/MDM complex, which serves as a molecular tether to connect the endoplasmic reticulum (ER) and mitochondria. Components of this complex are involved in the control of mitochondrial shape and protein biogenesis, and function in nonvesicular lipid trafficking between the ER and mitochondria. Mdm12 is required for the interaction of the ER-resident membrane protein mmm1 and the outer mitochondrial membrane-resident beta-barrel protein mdm10. The mdm12-mmm1 subcomplex functions in the major beta-barrel assembly pathway that is responsible for biogenesis of all mitochondrial outer membrane beta-barrel proteins, and acts in a late step after the SAM complex. The mdm10-mdm12-mmm1 subcomplex further acts in the TOM40-specific pathway after the action of the mdm12-mmm1 complex. Essential for establishing and maintaining the structure of mitochondria and maintenance of mtDNA nucleoids. In Neosartorya fischeri (strain ATCC 1020 / DSM 3700 / CBS 544.65 / FGSC A1164 / JCM 1740 / NRRL 181 / WB 181) (Aspergillus fischerianus), this protein is Mitochondrial distribution and morphology protein 12.